The following is an 805-amino-acid chain: Transducer protein BasT (805 aa).

The next 2 membrane-spanning stretches (helical) occupy residues 25–45 (FNVL…YIHL) and 296–316 (NLAG…LTVG). HAMP domains lie at 317–370 (RRTS…TAAS) and 437–490 (ERLE…ATLA). The Methyl-accepting transducer domain maps to 509-745 (SAAEIRSASD…EVVTMIDEVT (237 aa)). The disordered stretch occupies residues 513-532 (IRSASDQVSESVQDISADAD). The segment covering 516 to 526 (ASDQVSESVQD) has biased composition (polar residues). Glutamate 554, glutamate 736, and glutamate 763 each carry glutamate methyl ester (Glu). The segment at 752–779 (ATESQQVSAAAEEQAASVSEVAGRADDL) is disordered. Low complexity predominate over residues 754 to 773 (ESQQVSAAAEEQAASVSEVA).

The protein belongs to the methyl-accepting chemotaxis (MCP) protein family. In terms of assembly, interacts with CheA, CheY, CheW1 and CheW2. Methylated by CheR.

The protein localises to the cell membrane. Mediates chemotaxis towards five attractant amino acids (leucine, isoleucine, valine, methionine and cysteine). Probably transduces the signal from the substrate-binding protein BasB to the histidine kinase CheA. The protein is Transducer protein BasT (basT) of Halobacterium salinarum (strain ATCC 29341 / DSM 671 / R1).